The chain runs to 476 residues: MVGTMWKVIVSLVLLMPGSCDGLFRSLYRSVSMPPKGDSGQPLFLTPYIEAGKIQKGRELSLVSPFLGLNMRSYAGFLTVNKTYNSNLFFWFFPAQIQPEDAPVVLWLQGGPGFSSMFGLFVEHGPYVVTSNMTLRDRDFPWTTTLSMLYIDNPVGTGFSFTDDTHGYAVNEDDVAQDLYSALIQFFQIFPEYKNNDFYVTGESYAGKYVPAIAHLIHSLNPVREVKINLKGIAIGDGYSDPESIIGGYAEFLYQIGLLDEKQKKYFQKQCHECIEHIRKQNWFQAFEILDKLLDGDLTSDPSYFQNVTGCSNYCNFLRCTEPEDQLYYAKFLSLPEVRQAIHVGNRTFNDGTTVEKYLREDTVQSVKPWLTEIMNNYKVLIYNGQLDIIVAAALTEHSLMGMDWKGSQEYKKAEKKVWKIFKSDSEVAGYVRQVGDFHQVIIRGGGHILPYIQPLRAFDMINRFIYGKGWDPYVG.

The first 22 residues, 1–22 (MVGTMWKVIVSLVLLMPGSCDG), serve as a signal peptide directing secretion. Asn81 and Asn132 each carry an N-linked (GlcNAc...) asparagine glycan. Ser204 is a catalytic residue. Asn307 and Asn346 each carry an N-linked (GlcNAc...) asparagine glycan. Residues Asp388 and His448 contribute to the active site.

This sequence belongs to the peptidase S10 family.

In terms of biological role, may be involved in the digestion of phagocytosed particles in the lysosome, participation in an inflammatory protease cascade, and trimming of peptides for antigen presentation. The sequence is that of Probable serine carboxypeptidase CPVL (CPVL) from Pongo abelii (Sumatran orangutan).